A 263-amino-acid polypeptide reads, in one-letter code: Putative S-adenosyl-L-methionine-dependent methyltransferase Mjls_0079 (263 aa).

S-adenosyl-L-methionine contacts are provided by residues Asp121 and 150 to 151; that span reads ES.

The protein belongs to the UPF0677 family.

Functionally, exhibits S-adenosyl-L-methionine-dependent methyltransferase activity. The chain is Putative S-adenosyl-L-methionine-dependent methyltransferase Mjls_0079 from Mycobacterium sp. (strain JLS).